Here is a 482-residue protein sequence, read N- to C-terminus: Glutamate--tRNA ligase 2 (482 aa).

The short motif at 16 to 26 (PSPTGYLHLGN) is the 'HIGH' region element. 4 residues coordinate Zn(2+): cysteine 113, cysteine 115, cysteine 140, and histidine 142. The short motif at 257-261 (PLSKR) is the 'KMSKS' region element. Lysine 260 contacts ATP.

This sequence belongs to the class-I aminoacyl-tRNA synthetase family. Glutamate--tRNA ligase type 1 subfamily. Monomer. Requires Zn(2+) as cofactor.

The protein resides in the cytoplasm. It catalyses the reaction tRNA(Glu) + L-glutamate + ATP = L-glutamyl-tRNA(Glu) + AMP + diphosphate. Its function is as follows. Catalyzes the attachment of glutamate to tRNA(Glu) in a two-step reaction: glutamate is first activated by ATP to form Glu-AMP and then transferred to the acceptor end of tRNA(Glu). In Acidithiobacillus ferrooxidans (strain ATCC 53993 / BNL-5-31) (Leptospirillum ferrooxidans (ATCC 53993)), this protein is Glutamate--tRNA ligase 2.